The chain runs to 59 residues: Large ribosomal subunit protein uL30 (59 aa).

The protein belongs to the universal ribosomal protein uL30 family. In terms of assembly, part of the 50S ribosomal subunit.

This Clostridium botulinum (strain 657 / Type Ba4) protein is Large ribosomal subunit protein uL30.